We begin with the raw amino-acid sequence, 550 residues long: M-phase inducer phosphatase 1-B (550 aa).

2 disordered regions span residues 76-98 (NLGD…GKVE) and 285-335 (SPSM…QRRG). The span at 290-310 (EKLDRPMLKRPVRPLDSETPV) shows a compositional bias: basic and acidic residues. The segment covering 322 to 335 (LQPQEENFQPQRRG) has biased composition (polar residues). One can recognise a Rhodanese domain in the interval 401-508 (LVEKIFIIDC…FFPEYKELCE (108 aa)). C457 is an active-site residue.

This sequence belongs to the MPI phosphatase family.

The enzyme catalyses O-phospho-L-tyrosyl-[protein] + H2O = L-tyrosyl-[protein] + phosphate. Tyrosine protein phosphatase which functions as a dosage-dependent inducer of mitotic progression. Directly dephosphorylates CDK1 and stimulates its kinase activity. The polypeptide is M-phase inducer phosphatase 1-B (cdc25-1-b) (Xenopus laevis (African clawed frog)).